We begin with the raw amino-acid sequence, 313 residues long: Ribosomal RNA small subunit methyltransferase H (313 aa).

S-adenosyl-L-methionine-binding positions include 35 to 37 (GGH), Asp-55, Phe-79, Asp-101, and Gln-108.

The protein belongs to the methyltransferase superfamily. RsmH family.

The protein resides in the cytoplasm. The catalysed reaction is cytidine(1402) in 16S rRNA + S-adenosyl-L-methionine = N(4)-methylcytidine(1402) in 16S rRNA + S-adenosyl-L-homocysteine + H(+). Specifically methylates the N4 position of cytidine in position 1402 (C1402) of 16S rRNA. In Salmonella arizonae (strain ATCC BAA-731 / CDC346-86 / RSK2980), this protein is Ribosomal RNA small subunit methyltransferase H.